The sequence spans 95 residues: MSIKPLHDRVVVKPIEADEVSAGGIVIPDSAKEKSTKGEVVAIGAGKPLDNGSLRAPVVKVGDKVIYGQYAGSSYKSEGVEYKVLREDDILAVIG.

It belongs to the GroES chaperonin family. Heptamer of 7 subunits arranged in a ring. Interacts with the chaperonin GroEL.

Its subcellular location is the cytoplasm. In terms of biological role, together with the chaperonin GroEL, plays an essential role in assisting protein folding. The GroEL-GroES system forms a nano-cage that allows encapsulation of the non-native substrate proteins and provides a physical environment optimized to promote and accelerate protein folding. GroES binds to the apical surface of the GroEL ring, thereby capping the opening of the GroEL channel. The sequence is that of Co-chaperonin GroES from Xanthomonas axonopodis pv. citri (strain 306).